The chain runs to 622 residues: DNA mismatch repair protein MutL (622 aa).

The span at 399-414 shows a compositional bias: basic and acidic residues; it reads SSQNFHPDENDYRAEE. The disordered stretch occupies residues 399–422; the sequence is SSQNFHPDENDYRAEEASPAEENP.

It belongs to the DNA mismatch repair MutL/HexB family.

In terms of biological role, this protein is involved in the repair of mismatches in DNA. It is required for dam-dependent methyl-directed DNA mismatch repair. May act as a 'molecular matchmaker', a protein that promotes the formation of a stable complex between two or more DNA-binding proteins in an ATP-dependent manner without itself being part of a final effector complex. This is DNA mismatch repair protein MutL from Phocaeicola vulgatus (strain ATCC 8482 / DSM 1447 / JCM 5826 / CCUG 4940 / NBRC 14291 / NCTC 11154) (Bacteroides vulgatus).